The chain runs to 334 residues: Protein POLAR-like 1 (334 aa).

Residues 53–63 show a composition bias toward basic and acidic residues; the sequence is IRTSSEDDHHR. Residues 53–74 form a disordered region; sequence IRTSSEDDHHRVGQFSDSPPPT. The stretch at 273–300 forms a coiled coil; that stretch reads ETRQQEEIKELEIALDDAKQRLHLKETE.

The protein localises to the cytoplasm. Its subcellular location is the cell cortex. Its function is as follows. Acts as a stomatal lineage scaffold which regulates subcellular localization and transient polarization of kinases (e.g. ASK7/BIN2 and ASK3/SK12) involved in asymmetric cell division (ACD) in a BASL-dependent manner. This Arabidopsis thaliana (Mouse-ear cress) protein is Protein POLAR-like 1.